Reading from the N-terminus, the 302-residue chain is tRNA dimethylallyltransferase (302 aa).

An ATP-binding site is contributed by 9 to 16; the sequence is GPTGTGKS. 11-16 lines the substrate pocket; that stretch reads TGTGKS.

This sequence belongs to the IPP transferase family. Monomer. It depends on Mg(2+) as a cofactor.

It carries out the reaction adenosine(37) in tRNA + dimethylallyl diphosphate = N(6)-dimethylallyladenosine(37) in tRNA + diphosphate. Catalyzes the transfer of a dimethylallyl group onto the adenine at position 37 in tRNAs that read codons beginning with uridine, leading to the formation of N6-(dimethylallyl)adenosine (i(6)A). This is tRNA dimethylallyltransferase from Mycolicibacterium smegmatis (strain ATCC 700084 / mc(2)155) (Mycobacterium smegmatis).